The sequence spans 317 residues: Malate dehydrogenase (317 aa).

Residues 10–15 and Asp34 contribute to the NAD(+) site; that span reads GGGQIG. Substrate is bound by residues Arg83 and Arg89. Residues Asn96 and 119–121 contribute to the NAD(+) site; that span reads ISN. Substrate contacts are provided by Asn121 and Arg152. His176 (proton acceptor) is an active-site residue.

The protein belongs to the LDH/MDH superfamily. MDH type 3 family.

The enzyme catalyses (S)-malate + NAD(+) = oxaloacetate + NADH + H(+). Catalyzes the reversible oxidation of malate to oxaloacetate. The polypeptide is Malate dehydrogenase (Citrifermentans bemidjiense (strain ATCC BAA-1014 / DSM 16622 / JCM 12645 / Bem) (Geobacter bemidjiensis)).